The chain runs to 273 residues: Diaminopimelate epimerase (273 aa).

N11 and N60 together coordinate substrate. C69 functions as the Proton donor in the catalytic mechanism. Substrate contacts are provided by residues 70-71 (GN), N181, and 199-200 (ER). C209 serves as the catalytic Proton acceptor. Residue 210–211 (GT) coordinates substrate.

It belongs to the diaminopimelate epimerase family. Homodimer.

It is found in the cytoplasm. It carries out the reaction (2S,6S)-2,6-diaminopimelate = meso-2,6-diaminopimelate. The protein operates within amino-acid biosynthesis; L-lysine biosynthesis via DAP pathway; DL-2,6-diaminopimelate from LL-2,6-diaminopimelate: step 1/1. Catalyzes the stereoinversion of LL-2,6-diaminopimelate (L,L-DAP) to meso-diaminopimelate (meso-DAP), a precursor of L-lysine and an essential component of the bacterial peptidoglycan. This chain is Diaminopimelate epimerase, found in Helicobacter pylori (strain Shi470).